The following is a 237-amino-acid chain: Demethylmenaquinone methyltransferase (237 aa).

S-adenosyl-L-methionine-binding positions include Thr-58, Asp-79, and Asn-106–Ala-107.

It belongs to the class I-like SAM-binding methyltransferase superfamily. MenG/UbiE family.

The catalysed reaction is a 2-demethylmenaquinol + S-adenosyl-L-methionine = a menaquinol + S-adenosyl-L-homocysteine + H(+). It participates in quinol/quinone metabolism; menaquinone biosynthesis; menaquinol from 1,4-dihydroxy-2-naphthoate: step 2/2. Functionally, methyltransferase required for the conversion of demethylmenaquinol (DMKH2) to menaquinol (MKH2). The polypeptide is Demethylmenaquinone methyltransferase (Bacillus cereus (strain B4264)).